The sequence spans 363 residues: Aminomethyltransferase (363 aa).

The protein belongs to the GcvT family. As to quaternary structure, the glycine cleavage system is composed of four proteins: P, T, L and H.

The catalysed reaction is N(6)-[(R)-S(8)-aminomethyldihydrolipoyl]-L-lysyl-[protein] + (6S)-5,6,7,8-tetrahydrofolate = N(6)-[(R)-dihydrolipoyl]-L-lysyl-[protein] + (6R)-5,10-methylene-5,6,7,8-tetrahydrofolate + NH4(+). Functionally, the glycine cleavage system catalyzes the degradation of glycine. The sequence is that of Aminomethyltransferase from Staphylococcus aureus (strain N315).